A 218-amino-acid polypeptide reads, in one-letter code: Thiopurine S-methyltransferase (218 aa).

The S-adenosyl-L-methionine site is built by Trp-10, Leu-45, Glu-66, and Arg-123.

This sequence belongs to the class I-like SAM-binding methyltransferase superfamily. TPMT family.

It is found in the cytoplasm. It catalyses the reaction S-adenosyl-L-methionine + a thiopurine = S-adenosyl-L-homocysteine + a thiopurine S-methylether.. This chain is Thiopurine S-methyltransferase, found in Azotobacter vinelandii (strain DJ / ATCC BAA-1303).